We begin with the raw amino-acid sequence, 265 residues long: Ni-sirohydrochlorin a,c-diamide reductive cyclase complex, component CfbC (265 aa).

It belongs to the NifH/BchL/ChlL family. In terms of assembly, homodimer. The Ni-sirohydrochlorin a,c-diamide reductive cyclase complex is composed of a NifH homolog component CfbC and a NifD homolog component CfbD. It depends on [4Fe-4S] cluster as a cofactor.

It catalyses the reaction Ni-sirohydrochlorin a,c-diamide + 3 AH2 + ATP + H2O = 15,17(3)-seco-F430-17(3)-acid + 3 A + ADP + phosphate. Its function is as follows. Involved in the biosynthesis of the unique nickel-containing tetrapyrrole coenzyme F430, the prosthetic group of methyl-coenzyme M reductase (MCR), which plays a key role in methanogenesis and anaerobic methane oxidation. Catalyzes both the six-electron reduction of the tetrahydroporphyrin ring system and the gamma-lactamization of the c-acetamide side chain of Ni-sirohydrochlorin a,c-diamide to yield 15,17(3)-seco-F430-17(3)-acid (seco-F430), the last intermediate in the biosynthesis of the coenzyme F430. The polypeptide is Ni-sirohydrochlorin a,c-diamide reductive cyclase complex, component CfbC (Methanosarcina barkeri (strain Fusaro / DSM 804)).